Here is a 692-residue protein sequence, read N- to C-terminus: Elongation factor G (692 aa).

The 275-residue stretch at 8–282 folds into the tr-type G domain; the sequence is AKTRNIGIMA…AVIAYLPSPL (275 aa). Residues 17-24, 81-85, and 135-138 contribute to the GTP site; these read AHVDAGKT, DTPGH, and NKMD.

The protein belongs to the TRAFAC class translation factor GTPase superfamily. Classic translation factor GTPase family. EF-G/EF-2 subfamily.

The protein localises to the cytoplasm. Catalyzes the GTP-dependent ribosomal translocation step during translation elongation. During this step, the ribosome changes from the pre-translocational (PRE) to the post-translocational (POST) state as the newly formed A-site-bound peptidyl-tRNA and P-site-bound deacylated tRNA move to the P and E sites, respectively. Catalyzes the coordinated movement of the two tRNA molecules, the mRNA and conformational changes in the ribosome. The sequence is that of Elongation factor G (fus) from Streptococcus pyogenes serotype M1.